The primary structure comprises 254 residues: 3-deoxy-manno-octulosonate cytidylyltransferase (254 aa).

It belongs to the KdsB family.

It localises to the cytoplasm. It carries out the reaction 3-deoxy-alpha-D-manno-oct-2-ulosonate + CTP = CMP-3-deoxy-beta-D-manno-octulosonate + diphosphate. It participates in nucleotide-sugar biosynthesis; CMP-3-deoxy-D-manno-octulosonate biosynthesis; CMP-3-deoxy-D-manno-octulosonate from 3-deoxy-D-manno-octulosonate and CTP: step 1/1. It functions in the pathway bacterial outer membrane biogenesis; lipopolysaccharide biosynthesis. Its function is as follows. Activates KDO (a required 8-carbon sugar) for incorporation into bacterial lipopolysaccharide in Gram-negative bacteria. This chain is 3-deoxy-manno-octulosonate cytidylyltransferase, found in Pseudomonas aeruginosa (strain UCBPP-PA14).